The primary structure comprises 224 residues: Heme response regulator HssR (224 aa).

The Response regulatory domain occupies 3 to 116 (NCLIVDDDKK…ELLFRIKAVL (114 aa)). D52 carries the post-translational modification 4-aspartylphosphate. A DNA-binding region (ompR/PhoB-type) is located at residues 124-222 (DNELQLGNLI…VRGQGYRVDQ (99 aa)).

In terms of processing, phosphorylated by HssS.

Its subcellular location is the cytoplasm. Member of the two-component regulatory system HssS/HssR involved in intracellular heme homeostasis and tempering of staphylococcal virulence. Phosphorylated HssR binds to a direct repeat sequence within hrtAB promoter and activates the expression of hrtAB, an efflux pump, in response to extracellular heme, hemin, hemoglobin or blood. This Staphylococcus epidermidis (strain ATCC 12228 / FDA PCI 1200) protein is Heme response regulator HssR (hssR).